We begin with the raw amino-acid sequence, 112 residues long: Probable prefoldin subunit 1 (112 aa).

Belongs to the prefoldin subunit beta family. As to quaternary structure, heterohexamer of two PFD-alpha type and four PFD-beta type subunits.

In terms of biological role, binds specifically to cytosolic chaperonin (c-CPN) and transfers target proteins to it. Binds to nascent polypeptide chain and promotes folding in an environment in which there are many competing pathways for nonnative proteins. This is Probable prefoldin subunit 1 from Schizosaccharomyces pombe (strain 972 / ATCC 24843) (Fission yeast).